A 201-amino-acid polypeptide reads, in one-letter code: ATP-dependent Clp protease proteolytic subunit (201 aa).

Serine 105 (nucleophile) is an active-site residue. The active site involves histidine 130.

The protein belongs to the peptidase S14 family. Fourteen ClpP subunits assemble into 2 heptameric rings which stack back to back to give a disk-like structure with a central cavity, resembling the structure of eukaryotic proteasomes.

It is found in the cytoplasm. The catalysed reaction is Hydrolysis of proteins to small peptides in the presence of ATP and magnesium. alpha-casein is the usual test substrate. In the absence of ATP, only oligopeptides shorter than five residues are hydrolyzed (such as succinyl-Leu-Tyr-|-NHMec, and Leu-Tyr-Leu-|-Tyr-Trp, in which cleavage of the -Tyr-|-Leu- and -Tyr-|-Trp bonds also occurs).. Functionally, cleaves peptides in various proteins in a process that requires ATP hydrolysis. Has a chymotrypsin-like activity. Plays a major role in the degradation of misfolded proteins. This chain is ATP-dependent Clp protease proteolytic subunit, found in Acinetobacter baylyi (strain ATCC 33305 / BD413 / ADP1).